Consider the following 246-residue polypeptide: MALRVDYEGSNDVGVFCTLTNSYCLVGVGGTQNFYSILEAELSDLIPVVHTSIASTRIVGRLTVGNRHGLLVPNATTDQELQHLRNSLPDEVAIRRVDERLSALGNVIACNDHVAIVHAEISAETEQALVEVLKVEVFRVSLAQNSLVGSYCILSSNGCLVAARTPPETQREIAALLQIPVVAGTCNRGSELIGAGMVVNDWVAFCGLDSTSTELSVVESIFKLGEQGAPTSISNQLRDTLIESML.

It belongs to the eIF-6 family. Monomer. Associates with the 60S ribosomal subunit.

It is found in the cytoplasm. It localises to the nucleus. The protein resides in the nucleolus. In terms of biological role, binds to the 60S ribosomal subunit and prevents its association with the 40S ribosomal subunit to form the 80S initiation complex in the cytoplasm. May also be involved in ribosome biogenesis. Involved in miRNA-mediated gene silencing. The protein is Eukaryotic translation initiation factor 6 of Caenorhabditis elegans.